We begin with the raw amino-acid sequence, 275 residues long: Small ribosomal subunit protein uS2 (275 aa).

Residues 226-275 form a disordered region; it reads AAAPNSASVREEEFSAEAGDEGKGRRAPAKKATEKKADAPAAAPEAPAAE. Residues 264–275 show a composition bias toward low complexity; sequence APAAAPEAPAAE.

Belongs to the universal ribosomal protein uS2 family.

The polypeptide is Small ribosomal subunit protein uS2 (Xanthomonas campestris pv. campestris (strain 8004)).